The sequence spans 952 residues: Protein translocase subunit SecA (952 aa).

ATP contacts are provided by residues glutamine 135, 153–157 (GEGKT), and aspartate 575. Residues 916 to 930 (VSAKAATQPAAPAAK) are compositionally biased toward low complexity. The disordered stretch occupies residues 916 to 952 (VSAKAATQPAAPAAKEVGRNDPCPCGSGKKYKKCCGK). Residues cysteine 938, cysteine 940, cysteine 949, and cysteine 950 each coordinate Zn(2+).

This sequence belongs to the SecA family. Monomer and homodimer. Part of the essential Sec protein translocation apparatus which comprises SecA, SecYEG and auxiliary proteins SecDF. Other proteins may also be involved. Zn(2+) is required as a cofactor.

The protein localises to the cell membrane. Its subcellular location is the cytoplasm. It carries out the reaction ATP + H2O + cellular proteinSide 1 = ADP + phosphate + cellular proteinSide 2.. Part of the Sec protein translocase complex. Interacts with the SecYEG preprotein conducting channel. Has a central role in coupling the hydrolysis of ATP to the transfer of proteins into and across the cell membrane, serving as an ATP-driven molecular motor driving the stepwise translocation of polypeptide chains across the membrane. The polypeptide is Protein translocase subunit SecA (Dehalococcoides mccartyi (strain ATCC BAA-2266 / KCTC 15142 / 195) (Dehalococcoides ethenogenes (strain 195))).